We begin with the raw amino-acid sequence, 414 residues long: Mannan endo-1,4-beta-mannosidase 3 (414 aa).

Residues 1–19 (MKCLCFVVLLAILIAQNSS) form the signal peptide. Residues Asn-17 and Asn-75 are each glycosylated (N-linked (GlcNAc...) asparagine). Trp-87 contributes to the substrate binding site. N-linked (GlcNAc...) asparagine glycans are attached at residues Asn-133 and Asn-153. Asn-202 serves as a coordination point for substrate. The active-site Proton donor is Glu-203. Tyr-283 provides a ligand contact to substrate. Glu-323 serves as the catalytic Nucleophile. N-linked (GlcNAc...) asparagine glycosylation is present at Asn-343. Residue Trp-365 coordinates substrate. Asn-386 carries N-linked (GlcNAc...) asparagine glycosylation.

This sequence belongs to the glycosyl hydrolase 5 (cellulase A) family. In terms of tissue distribution, expressed in leaves, flowers, siliques and seeds.

The protein localises to the secreted. The catalysed reaction is Random hydrolysis of (1-&gt;4)-beta-D-mannosidic linkages in mannans, galactomannans and glucomannans.. The chain is Mannan endo-1,4-beta-mannosidase 3 (MAN3) from Arabidopsis thaliana (Mouse-ear cress).